Reading from the N-terminus, the 231-residue chain is UPF0702 transmembrane protein YetF (231 aa).

A run of 3 helical transmembrane segments spans residues 5-25, 33-53, and 59-79; these read LSVA…LKLL, ITPF…NAVY, and IKEI…IEFI.

This sequence belongs to the UPF0702 family.

The protein localises to the cell membrane. The polypeptide is UPF0702 transmembrane protein YetF (yetF) (Bacillus subtilis (strain 168)).